A 205-amino-acid polypeptide reads, in one-letter code: Ribosome maturation factor RimP (205 aa).

Over residues 1–12 (MSNAEAQASSDH) the composition is skewed to polar residues. Disordered stretches follow at residues 1–24 (MSNA…APAH) and 186–205 (FSHL…SEEA).

Belongs to the RimP family.

It localises to the cytoplasm. Its function is as follows. Required for maturation of 30S ribosomal subunits. The protein is Ribosome maturation factor RimP of Pseudarthrobacter chlorophenolicus (strain ATCC 700700 / DSM 12829 / CIP 107037 / JCM 12360 / KCTC 9906 / NCIMB 13794 / A6) (Arthrobacter chlorophenolicus).